The primary structure comprises 1551 residues: UDP-glucose:glycoprotein glucosyltransferase 1 (1551 aa).

A signal peptide spans 1–42 (MCSRGDANAAGAAAARRVTGLCYNMGLLIALALLCLFSLAEA). N269, N536, N1015, and N1228 each carry an N-linked (GlcNAc...) asparagine glycan. Residues 1244–1551 (KTEEVKQDKD…QEGSQKHEEL (308 aa)) are glucosyltransferase. At S1277 the chain carries Phosphoserine. The segment at 1531 to 1551 (KELGTLHEEETQEGSQKHEEL) is disordered. Residues 1548–1551 (HEEL) carry the Prevents secretion from ER motif.

This sequence belongs to the glycosyltransferase 8 family. In terms of assembly, monomer as well as in a tight complex with SELENOF. Interacts with METTL23. Part of a large chaperone multiprotein complex comprising DNAJB11, HSP90B1, HSPA5, HYOU, PDIA2, PDIA4, PDIA6, PPIB, SDF2L1, UGGT1 and very small amounts of ERP29, but not, or at very low levels, CALR nor CANX. It depends on Ca(2+) as a cofactor.

Its subcellular location is the endoplasmic reticulum lumen. The protein localises to the endoplasmic reticulum-Golgi intermediate compartment. The enzyme catalyses N(4)-(alpha-D-Man-(1-&gt;2)-alpha-D-Man-(1-&gt;2)-alpha-D-Man-(1-&gt;3)-[alpha-D-Man-(1-&gt;2)-alpha-D-Man-(1-&gt;3)-[alpha-D-Man-(1-&gt;2)-alpha-D-Man-(1-&gt;6)]-alpha-D-Man-(1-&gt;6)]-beta-D-Man-(1-&gt;4)-beta-D-GlcNAc-(1-&gt;4)-beta-D-GlcNAc)-L-asparaginyl-[protein] (N-glucan mannose isomer 9A1,2,3B1,2,3) + UDP-alpha-D-glucose = N(4)-(alpha-D-Glc-(1-&gt;3)-alpha-D-Man-(1-&gt;2)-alpha-D-Man-(1-&gt;2)-alpha-D-Man-(1-&gt;3)-[alpha-D-Man-(1-&gt;2)-alpha-D-Man-(1-&gt;3)-[alpha-D-Man-(1-&gt;2)-alpha-D-Man-(1-&gt;6)]-alpha-D-Man-(1-&gt;6)]-beta-D-Man-(1-&gt;4)-beta-D-GlcNAc-(1-&gt;4)-beta-D-GlcNAc)-L-asparaginyl-[protein] + UDP + H(+). The protein operates within protein modification; protein glycosylation. Its function is as follows. Recognizes glycoproteins with minor folding defects. Reglucosylates single N-glycans near the misfolded part of the protein, thus providing quality control for protein folding in the endoplasmic reticulum. Reglucosylated proteins are recognized by calreticulin for recycling to the endoplasmic reticulum and refolding or degradation. The chain is UDP-glucose:glycoprotein glucosyltransferase 1 (Uggt1) from Rattus norvegicus (Rat).